The sequence spans 269 residues: MERSQSRLSLSASFEALAIYFPCMNSFDDEDAGDSRRLKGAIQRSTETGLAVEMPSRTLRQASHESIEDSMNSYGSEGNLNYGGVCLASDAQFSDFLGSMGPAQFVGRQTLATTPMGDVEIGLQERNGQLEVDIIQARGLTAKPGSKTLPAAYIKAYLLENGICIAKKKTKVARKSLDPLYNQVLLFPESPQGKVLQVIVWGNYGRMERKQFMGVARVLLEELDLTTLAVGWYKLFPTSSMVDPATGPLLRQASQLSLESTVGPCGERS.

A C2 domain is found at 115 to 233 (PMGDVEIGLQ…DLTTLAVGWY (119 aa)). Phosphoserine is present on residues serine 254 and serine 257.

Binds PPFIA3. Does not bind RAB3.

The protein resides in the synapse. Functionally, regulates synaptic membrane exocytosis. The sequence is that of Regulating synaptic membrane exocytosis protein 4 (RIMS4) from Homo sapiens (Human).